Consider the following 184-residue polypeptide: Peptide deformylase (184 aa).

Cys-111 and His-154 together coordinate Fe cation. Glu-155 is a catalytic residue. His-158 provides a ligand contact to Fe cation.

It belongs to the polypeptide deformylase family. Requires Fe(2+) as cofactor.

The catalysed reaction is N-terminal N-formyl-L-methionyl-[peptide] + H2O = N-terminal L-methionyl-[peptide] + formate. Its function is as follows. Removes the formyl group from the N-terminal Met of newly synthesized proteins. Requires at least a dipeptide for an efficient rate of reaction. N-terminal L-methionine is a prerequisite for activity but the enzyme has broad specificity at other positions. The sequence is that of Peptide deformylase from Lacticaseibacillus casei (strain BL23) (Lactobacillus casei).